The chain runs to 959 residues: Translation initiation factor IF-2 (959 aa).

Over residues 1-10 (MSDKTNDDKT) the composition is skewed to basic and acidic residues. A disordered region spans residues 1 to 374 (MSDKTNDDKT…SQMQETREKI (374 aa)). The segment covering 27–37 (EQSTVRQNFSH) has biased composition (polar residues). 2 stretches are compositionally biased toward low complexity: residues 63–118 (AAAA…VTKP) and 128–138 (QRPGGQQAQRP). Basic and acidic residues-rich tracts occupy residues 154–225 (SEMD…EAAK) and 232–241 (ARSERRDDAR). A compositionally biased stretch (low complexity) spans 246–284 (GARPQQAGRPQGGRPQPAGRPQQGSPRPAPIIADAAPIA). The segment covering 318–333 (PEVRAPKVVKGEDDRR) has biased composition (basic and acidic residues). Positions 457–626 (SRPPVVTIMG…LLQAEMLDLK (170 aa)) constitute a tr-type G domain. The interval 466–473 (GHVDHGKT) is G1. 466-473 (GHVDHGKT) provides a ligand contact to GTP. Positions 491-495 (GITQH) are G2. Positions 512 to 515 (DTPG) are G3. Residues 512–516 (DTPGH) and 566–569 (NKID) each bind GTP. The G4 stretch occupies residues 566 to 569 (NKID). Residues 602–604 (SAK) form a G5 region.

This sequence belongs to the TRAFAC class translation factor GTPase superfamily. Classic translation factor GTPase family. IF-2 subfamily.

The protein localises to the cytoplasm. Its function is as follows. One of the essential components for the initiation of protein synthesis. Protects formylmethionyl-tRNA from spontaneous hydrolysis and promotes its binding to the 30S ribosomal subunits. Also involved in the hydrolysis of GTP during the formation of the 70S ribosomal complex. The polypeptide is Translation initiation factor IF-2 (Brucella abortus (strain 2308)).